Here is a 253-residue protein sequence, read N- to C-terminus: 5'/3'-nucleotidase SurE (253 aa).

A divalent metal cation contacts are provided by aspartate 8, aspartate 9, serine 39, and asparagine 92.

It belongs to the SurE nucleotidase family. A divalent metal cation serves as cofactor.

Its subcellular location is the cytoplasm. It catalyses the reaction a ribonucleoside 5'-phosphate + H2O = a ribonucleoside + phosphate. The enzyme catalyses a ribonucleoside 3'-phosphate + H2O = a ribonucleoside + phosphate. The catalysed reaction is [phosphate](n) + H2O = [phosphate](n-1) + phosphate + H(+). Its function is as follows. Nucleotidase with a broad substrate specificity as it can dephosphorylate various ribo- and deoxyribonucleoside 5'-monophosphates and ribonucleoside 3'-monophosphates with highest affinity to 3'-AMP. Also hydrolyzes polyphosphate (exopolyphosphatase activity) with the preference for short-chain-length substrates (P20-25). Might be involved in the regulation of dNTP and NTP pools, and in the turnover of 3'-mononucleotides produced by numerous intracellular RNases (T1, T2, and F) during the degradation of various RNAs. The polypeptide is 5'/3'-nucleotidase SurE (Shigella dysenteriae serotype 1 (strain Sd197)).